The chain runs to 680 residues: Zinc finger protein 263 (680 aa).

Lysine 19 is covalently cross-linked (Glycyl lysine isopeptide (Lys-Gly) (interchain with G-Cter in SUMO2)). Positions 43 to 125 (HLRFRRFRFQ…TLVERMQKEL (83 aa)) constitute an SCAN box domain. The tract at residues 147-191 (LPLETAGESPSFKLEPMETERSPGPRLQELLDPSPQRDSQAVKER) is disordered. A Glycyl lysine isopeptide (Lys-Gly) (interchain with G-Cter in SUMO2) cross-link involves residue lysine 159. 2 positions are modified to phosphoserine: serine 168 and serine 180. Residues lysine 286, lysine 300, and lysine 376 each participate in a glycyl lysine isopeptide (Lys-Gly) (interchain with G-Cter in SUMO2) cross-link. 5 consecutive C2H2-type zinc fingers follow at residues 378-400 (HLCALCGKNFSNNSNLIRHQRIH), 434-456 (HKCLECGKCFSQNTHLTRHQRTH), 462-484 (FQCNACGKSFSCNSNLNRHQRTH), 490-512 (YKCPECGEIFAHSSNLLRHQRIH), and 518-540 (YRCSECGKSFSRSSHLVIHERTH). Residues lysine 570 and lysine 579 each participate in a glycyl lysine isopeptide (Lys-Gly) (interchain with G-Cter in SUMO2) cross-link. C2H2-type zinc fingers lie at residues 572–594 (FECSTCGKSFRQGMHLTRHQRTH), 600–622 (YKCILCGENFSHRSNLIRHQRIH), 628–650 (YTCHECGDSFSHSSNRIRHLRTH), and 656–678 (YKCSECGESFSRSSRLTSHQRTH).

Belongs to the krueppel C2H2-type zinc-finger protein family. In terms of assembly, interacts with a number of proteins involved in chromatin modification and transcriptional corepression including DNMT1, DNMT3A, HDAC2, PHF8, TRIM28/KAP1, SETDB1, EZH2, UHRF1, CBX3/HP1-gamma, and CBX5/HP1-alpha; recruits these proteins to the SIX3 promoter region, leading to SIX3 transcriptional repression. Interacts with MAPK3/ERK1 and MAPK1/ERK2. Ubiquitinated, leading to proteasomal degradation. In terms of tissue distribution, expressed in Purkinje cells in the brain (at protein level).

The protein localises to the nucleus. In terms of biological role, transcription factor that binds to the consensus sequence 5'-TCCTCCC-3' and acts as a transcriptional repressor. Binds to the promoter region of SIX3 and recruits other proteins involved in chromatin modification and transcriptional corepression, resulting in methylation of the promoter and transcriptional repression. Acts as a transcriptional repressor of HS3ST1 and HS3ST3A1 via binding to gene promoter regions. The protein is Zinc finger protein 263 of Mus musculus (Mouse).